A 752-amino-acid polypeptide reads, in one-letter code: Photosystem I P700 chlorophyll a apoprotein A1 (752 aa).

The next 8 helical transmembrane spans lie at 73 to 96 (IFSA…FHGA), 159 to 182 (LYCT…FHYH), 198 to 222 (MNHH…HLSL), 294 to 312 (TAHH…GHMY), 349 to 372 (WHAQ…HHMY), 388 to 414 (LSLF…IFMV), 436 to 458 (AIVS…LYIH), and 533 to 551 (FMVH…LILV). [4Fe-4S] cluster contacts are provided by Cys575 and Cys584. Transmembrane regions (helical) follow at residues 591 to 612 (HVFL…HFSW) and 666 to 688 (LSAY…MFLF). His677 serves as a coordination point for chlorophyll a'. Chlorophyll a contacts are provided by Met685 and Tyr693. Trp694 is a phylloquinone binding site. Residues 726 to 746 (AVGVAHYLLGGIGTTWAFFLA) traverse the membrane as a helical segment.

This sequence belongs to the PsaA/PsaB family. The PsaA/B heterodimer binds the P700 chlorophyll special pair and subsequent electron acceptors. PSI consists of a core antenna complex that captures photons, and an electron transfer chain that converts photonic excitation into a charge separation. The eukaryotic PSI reaction center is composed of at least 11 subunits. P700 is a chlorophyll a/chlorophyll a' dimer, A0 is one or more chlorophyll a, A1 is one or both phylloquinones and FX is a shared 4Fe-4S iron-sulfur center. is required as a cofactor.

Its subcellular location is the plastid. It is found in the chloroplast thylakoid membrane. It carries out the reaction reduced [plastocyanin] + hnu + oxidized [2Fe-2S]-[ferredoxin] = oxidized [plastocyanin] + reduced [2Fe-2S]-[ferredoxin]. Its function is as follows. PsaA and PsaB bind P700, the primary electron donor of photosystem I (PSI), as well as the electron acceptors A0, A1 and FX. PSI is a plastocyanin/cytochrome c6-ferredoxin oxidoreductase, converting photonic excitation into a charge separation, which transfers an electron from the donor P700 chlorophyll pair to the spectroscopically characterized acceptors A0, A1, FX, FA and FB in turn. Oxidized P700 is reduced on the lumenal side of the thylakoid membrane by plastocyanin or cytochrome c6. The polypeptide is Photosystem I P700 chlorophyll a apoprotein A1 (Porphyra purpurea (Red seaweed)).